The sequence spans 255 residues: Acetylglutamate kinase (255 aa).

Substrate is bound by residues 40-41, Arg62, and Asn153; that span reads GG.

Belongs to the acetylglutamate kinase family. ArgB subfamily.

It localises to the cytoplasm. It catalyses the reaction N-acetyl-L-glutamate + ATP = N-acetyl-L-glutamyl 5-phosphate + ADP. It participates in amino-acid biosynthesis; L-arginine biosynthesis; N(2)-acetyl-L-ornithine from L-glutamate: step 2/4. Functionally, catalyzes the ATP-dependent phosphorylation of N-acetyl-L-glutamate. The sequence is that of Acetylglutamate kinase from Bacillus cereus (strain B4264).